Here is a 1791-residue protein sequence, read N- to C-terminus: Sodium channel protein type 11 subunit alpha (1791 aa).

Residues M1–S126 are Cytoplasmic-facing. The I repeat unit spans residues F115 to K408. Residues V127 to T148 form a helical membrane-spanning segment. Residues G149–S156 lie on the Extracellular side of the membrane. A helical membrane pass occupies residues N157–A180. Residues R181 to R192 lie on the Cytoplasmic side of the membrane. The helical transmembrane segment at D193 to P212 threads the bilayer. Over G213–L219 the chain is Extracellular. Residues P220–L239 traverse the membrane as a helical; Voltage-sensor segment. The Cytoplasmic segment spans residues K240–N255. The chain crosses the membrane as a helical span at residues V256–L269. Residues V270–N344 are Extracellular-facing. Cysteines 283 and 322 form a disulfide. N-linked (GlcNAc...) asparagine glycans are attached at residues N290 and N338. The pore-forming intramembrane region spans F345–L369. At R370–S376 the chain is on the extracellular side. A helical membrane pass occupies residues V377–A402. Topologically, residues Y403 to T572 are cytoplasmic. The II repeat unit spans residues C559–Q833. A helical membrane pass occupies residues V573–M596. The Extracellular portion of the chain corresponds to E597–K607. The chain crosses the membrane as a helical span at residues M608 to L631. Topologically, residues D632–R639 are cytoplasmic. Residues G640 to C659 form a helical membrane-spanning segment. Residues V660–P667 lie on the Extracellular side of the membrane. A helical; Voltage-sensor membrane pass occupies residues F668–L687. Residues N688 to G702 lie on the Cytoplasmic side of the membrane. A helical transmembrane segment spans residues S703–R725. Topologically, residues S726 to D753 are extracellular. An intramembrane region (pore-forming) is located at residues F754–W774. Over E775–S785 the chain is Extracellular. The cysteines at positions 776 and 787 are disulfide-linked. N-linked (GlcNAc...) asparagine glycosylation occurs at N781. Residues L786 to L811 traverse the membrane as a helical segment. Residues N812–Q1051 lie on the Cytoplasmic side of the membrane. The III repeat unit spans residues N1044–L1339. A helical membrane pass occupies residues I1052 to I1074. Residues F1075–E1088 lie on the Extracellular side of the membrane. The helical transmembrane segment at L1089–F1114 threads the bilayer. The Cytoplasmic portion of the chain corresponds to G1115 to S1120. Residues A1121–I1138 form a helical membrane-spanning segment. Position 1139 (N1139) is a topological domain, extracellular. Residues L1140–F1161 form a helical; Voltage-sensor membrane-spanning segment. Residues E1162–N1180 are Cytoplasmic-facing. A helical membrane pass occupies residues V1181–G1202. Over K1203–V1243 the chain is Extracellular. N1209, N1216, N1222, and N1230 each carry an N-linked (GlcNAc...) asparagine glycan. An intramembrane region (pore-forming) is located at residues G1244–A1265. Topologically, residues A1266 to N1281 are extracellular. A helical membrane pass occupies residues S1282–I1308. Over D1309 to D1361 the chain is Cytoplasmic. An IV repeat occupies I1348–Q1639. A helical membrane pass occupies residues I1362 to A1385. Residues E1386–S1396 lie on the Extracellular side of the membrane. The chain crosses the membrane as a helical span at residues I1397–L1420. Topologically, residues R1421–T1426 are cytoplasmic. A helical membrane pass occupies residues N1427–E1450. The Extracellular segment spans residues N1451–L1461. A helical; Voltage-sensor membrane pass occupies residues F1462 to R1484. Over T1485 to N1499 the chain is Cytoplasmic. The chain crosses the membrane as a helical span at residues I1500–V1522. Residues N1523 to T1536 lie on the Extracellular side of the membrane. The pore-forming intramembrane region spans F1537 to P1559. Over M1560–I1579 the chain is Extracellular. N1568 carries an N-linked (GlcNAc...) asparagine glycan. Residues A1580–L1604 traverse the membrane as a helical segment. Residues E1605 to D1791 are Cytoplasmic-facing.

The protein belongs to the sodium channel (TC 1.A.1.10) family. Nav1.9/SCN11A subfamily. In terms of assembly, the voltage-resistant sodium channel consists of an ion conducting pore forming alpha-subunit regulated by one or more auxiliary subunits SCN1B, SCN2B and SCN3B. In terms of tissue distribution, expressed in the dorsal root ganglia and trigeminal ganglia, olfactory bulb, hippocampus, cerebellar cortex, spinal cord, spleen, small intestine and placenta.

Its subcellular location is the cell membrane. It catalyses the reaction Na(+)(in) = Na(+)(out). With respect to regulation, activity is not sensitive to inhibition by tetrodotoxin. Functionally, sodium channel mediating the voltage-dependent sodium ion permeability of excitable membranes. Assuming opened or closed conformations in response to the voltage difference across the membrane, the protein forms a sodium-selective channel through which sodium ions may pass in accordance with their electrochemical gradient. Involved in membrane depolarization during action potential in nociceptors which function as key relay stations for the electrical transmission of pain signals from the periphery to the central nervous system. Also involved in rapid BDNF-evoked neuronal depolarization. This Homo sapiens (Human) protein is Sodium channel protein type 11 subunit alpha.